Here is a 149-residue protein sequence, read N- to C-terminus: Calmodulin-2 (149 aa).

An N-acetylalanine modification is found at Ala-2. 4 consecutive EF-hand domains span residues 8 to 43, 44 to 79, 81 to 116, and 117 to 149; these read EQIAEFKEAFSLFDKDGDGTITTKELGTVMRSLGQN, PTEAELQDMINEVDADGNGTIDFPEFLTMMARKMKD, DSEEEIREAFRVFDKDGNGFISAAELRHVMTNLGEK, and LTDEEVDEMVREADIDGDGQVNYEEFVEMMTSK. 14 residues coordinate Ca(2+): Asp-21, Asp-23, Asp-25, Thr-27, Glu-32, Asp-57, Asp-59, Asn-61, Thr-63, Glu-68, Asp-94, Asp-96, Asn-98, and Glu-105. Lys-116 is subject to N6,N6,N6-trimethyllysine. The Ca(2+) site is built by Asp-130, Asp-132, Asp-134, Gln-136, and Glu-141.

Belongs to the calmodulin family.

Its function is as follows. Calmodulin mediates the control of a large number of enzymes, ion channels and other proteins by Ca(2+). Among the enzymes to be stimulated by the calmodulin-Ca(2+) complex are a number of protein kinases and phosphatases. This is Calmodulin-2 (CAM2) from Branchiostoma lanceolatum (Common lancelet).